A 70-amino-acid polypeptide reads, in one-letter code: MLNPPLNQLTAKVNSKYLIATTAAKRARELDERRETALLDQYQSAKPVGKALEEIADGKIEPVVPKEYLG.

It belongs to the RNA polymerase subunit omega family. As to quaternary structure, the RNAP catalytic core consists of 2 alpha, 1 beta, 1 beta' and 1 omega subunit. When a sigma factor is associated with the core the holoenzyme is formed, which can initiate transcription.

It carries out the reaction RNA(n) + a ribonucleoside 5'-triphosphate = RNA(n+1) + diphosphate. Its function is as follows. Promotes RNA polymerase assembly. Latches the N- and C-terminal regions of the beta' subunit thereby facilitating its interaction with the beta and alpha subunits. This chain is DNA-directed RNA polymerase subunit omega, found in Staphylococcus epidermidis (strain ATCC 35984 / DSM 28319 / BCRC 17069 / CCUG 31568 / BM 3577 / RP62A).